A 212-amino-acid chain; its full sequence is Urease accessory protein UreG (212 aa).

Gly19–Thr26 lines the GTP pocket.

This sequence belongs to the SIMIBI class G3E GTPase family. UreG subfamily. In terms of assembly, homodimer. UreD, UreF and UreG form a complex that acts as a GTP-hydrolysis-dependent molecular chaperone, activating the urease apoprotein by helping to assemble the nickel containing metallocenter of UreC. The UreE protein probably delivers the nickel.

Its subcellular location is the cytoplasm. In terms of biological role, facilitates the functional incorporation of the urease nickel metallocenter. This process requires GTP hydrolysis, probably effectuated by UreG. In Vibrio parahaemolyticus, this protein is Urease accessory protein UreG.